We begin with the raw amino-acid sequence, 404 residues long: Argininosuccinate synthase (404 aa).

Residues 10-18 (AYSGGLDTS) and Ala-37 each bind ATP. L-citrulline contacts are provided by Tyr-90 and Ser-95. Gly-120 lines the ATP pocket. The L-aspartate site is built by Thr-122, Asn-126, and Asp-127. Asn-126 provides a ligand contact to L-citrulline. Residues Arg-130, Ser-181, Ser-190, Glu-266, and Tyr-278 each contribute to the L-citrulline site.

This sequence belongs to the argininosuccinate synthase family. Type 1 subfamily. As to quaternary structure, homotetramer.

The protein resides in the cytoplasm. It carries out the reaction L-citrulline + L-aspartate + ATP = 2-(N(omega)-L-arginino)succinate + AMP + diphosphate + H(+). It participates in amino-acid biosynthesis; L-arginine biosynthesis; L-arginine from L-ornithine and carbamoyl phosphate: step 2/3. The chain is Argininosuccinate synthase from Erythrobacter litoralis (strain HTCC2594).